Reading from the N-terminus, the 508-residue chain is Photosystem II CP47 reaction center protein (508 aa).

6 consecutive transmembrane segments (helical) span residues 21–36 (AVHI…WAGS), 101–115 (IVFS…IWHW), 140–156 (GIHL…FGAF), 203–218 (IAAG…FHLS), 237–252 (VLSS…AFVV), and 457–472 (TFAL…HGAR).

This sequence belongs to the PsbB/PsbC family. PsbB subfamily. In terms of assembly, PSII is composed of 1 copy each of membrane proteins PsbA, PsbB, PsbC, PsbD, PsbE, PsbF, PsbH, PsbI, PsbJ, PsbK, PsbL, PsbM, PsbT, PsbX, PsbY, PsbZ, Psb30/Ycf12, at least 3 peripheral proteins of the oxygen-evolving complex and a large number of cofactors. It forms dimeric complexes. Binds multiple chlorophylls. PSII binds additional chlorophylls, carotenoids and specific lipids. is required as a cofactor.

Its subcellular location is the plastid. The protein resides in the chloroplast thylakoid membrane. In terms of biological role, one of the components of the core complex of photosystem II (PSII). It binds chlorophyll and helps catalyze the primary light-induced photochemical processes of PSII. PSII is a light-driven water:plastoquinone oxidoreductase, using light energy to abstract electrons from H(2)O, generating O(2) and a proton gradient subsequently used for ATP formation. This Lolium perenne (Perennial ryegrass) protein is Photosystem II CP47 reaction center protein.